The sequence spans 283 residues: Non-selective voltage-gated ion channel VDAC1 (283 aa).

N-acetylalanine is present on Ala2. Lys12 provides a ligand contact to ATP. Residue Lys12 forms a Glycyl lysine isopeptide (Lys-Gly) (interchain with G-Cter in ubiquitin) linkage. Phosphoserine is present on Ser13. Thr19 bears the Phosphothreonine mark. ATP is bound at residue Lys20. Lys20 carries the N6-acetyllysine; alternate modification. At Lys20 the chain carries N6-succinyllysine; alternate. A Glycyl lysine isopeptide (Lys-Gly) (interchain with G-Cter in ubiquitin); alternate cross-link involves residue Lys20. Transmembrane regions (beta stranded) follow at residues 26-35 and 39-47; these read LIKLDLKTKS and LEFTSSGSA. Residues Lys53 and Lys61 each participate in a glycyl lysine isopeptide (Lys-Gly) (interchain with G-Cter in ubiquitin) cross-link. The beta stranded transmembrane segment at 54 to 64 threads the bilayer; the sequence is VTGSLETKYRW. Phosphotyrosine is present on Tyr67. The next 3 membrane-spanning stretches (beta stranded) occupy residues 69 to 76, 80 to 89, and 95 to 104; these read LTFTEKWN, TLGTEITVED, and LKLTFDSSFS. Thr107 is subject to Phosphothreonine. The residue at position 109 (Lys109) is an N6-acetyllysine; alternate. Lys109 is covalently cross-linked (Glycyl lysine isopeptide (Lys-Gly) (interchain with G-Cter in ubiquitin); alternate). Residue Lys110 forms a Glycyl lysine isopeptide (Lys-Gly) (interchain with G-Cter in ubiquitin) linkage. 4 beta stranded membrane-spanning segments follow: residues 111–120, 123–130, 137–145, and 150–158; these read NAKIKTGYKR, INLGCDVD, SIRGALVLG, and LAGYQMNFE. Residue Lys161 forms a Glycyl lysine isopeptide (Lys-Gly) (interchain with G-Cter in ubiquitin) linkage. 6 beta stranded membrane-spanning segments follow: residues 163 to 175, 178 to 185, 189 to 198, 202 to 211, 218 to 227, and 231 to 238; these read RVTQ…GYKT, FQLHTNVN, EFGGSIYQKV, LETAVNLAWT, RFGIAAKYQI, and ACFSAKVN. Phosphoserine; by NEK1 is present on Ser193. The residue at position 240 (Ser240) is a Phosphoserine. 242-244 is a binding site for NAD(+); that stretch reads LIG. The chain crosses the membrane as a beta stranded span at residues 242–251; it reads LIGLGYTQTL. Lys252 carries the N6-acetyllysine modification. Residues 254–263 traverse the membrane as a beta stranded segment; sequence GIKLTLSALL. 260 to 264 contacts NAD(+); that stretch reads SALLD. The residue at position 266 (Lys266) is an N6-acetyllysine; alternate. Residue Lys266 forms a Glycyl lysine isopeptide (Lys-Gly) (interchain with G-Cter in ubiquitin); alternate linkage. Residues 273–282 form a beta stranded membrane-spanning segment; the sequence is HKLGLGLEFQ. Lys274 is covalently cross-linked (Glycyl lysine isopeptide (Lys-Gly) (interchain with G-Cter in ubiquitin)).

Belongs to the eukaryotic mitochondrial porin family. In terms of assembly, homodimer and homotrimer; in response to cyclic AMP or calcium; oligomerization is required for scramblase activity. Component of the mitochondrial permeability transition pore complex (mPTPC), at least composed of SPG7, VDAC1 and PPIF. Interacts with SPG7, NIPSNAP2 and SLC25A30. Interacts with hexokinases including HK1. The HK1-VDAC1 complex interacts with ATF2. Interacts with BCL2L1. Interacts with BAK1. Interacts with RTL10/BOP (via BH3 domain). Interacts with amyloid-beta and APP; induces VDAC1 dephosphorylation. Interacts with TMEM41B. Interacts with BCAP31. Interacts with HSPA9; this interaction couples ITPR1 to VDAC1. Post-translationally, phosphorylation at Ser-193 by NEK1 promotes the closed conformational state preventing excessive mitochondrial membrane permeability and subsequent apoptotic cell death after injury. Phosphorylation by the AKT-GSK3B axis stabilizes the protein probably by preventing ubiquitin-mediated proteasomal degradation. In terms of processing, ubiquitinated. Undergoes monoubiquitination and polyubiquitination by PRKN; monoubiquitination at Lys-274 inhibits apoptosis, whereas polyubiquitination leads to its degradation and promotes mitophagy. Deubiquitinated by USP30. In terms of tissue distribution, predominantly in brain astrocytes.

Its subcellular location is the mitochondrion outer membrane. The protein resides in the cell membrane. The protein localises to the membrane raft. The catalysed reaction is chloride(in) = chloride(out). It catalyses the reaction K(+)(in) = K(+)(out). It carries out the reaction ATP(in) = ATP(out). The enzyme catalyses Ca(2+)(in) = Ca(2+)(out). The catalysed reaction is Na(+)(in) = Na(+)(out). It catalyses the reaction Mg(2+)(in) = Mg(2+)(out). It carries out the reaction L-glutamate(out) = L-glutamate(in). The enzyme catalyses dopamine(out) = dopamine(in). The catalysed reaction is acetylcholine(in) = acetylcholine(out). It catalyses the reaction Fe(III)-[cytochrome c](out) = Fe(III)-[cytochrome c](in). It carries out the reaction a 1,2-diacyl-sn-glycero-3-phosphocholine(in) = a 1,2-diacyl-sn-glycero-3-phosphocholine(out). The enzyme catalyses a 1,2-diacyl-sn-glycero-3-phospho-L-serine(in) = a 1,2-diacyl-sn-glycero-3-phospho-L-serine(out). With respect to regulation, inhibited by nitric oxide. In terms of biological role, non-selective voltage-gated ion channel that mediates the transport of anions and cations through the mitochondrion outer membrane and plasma membrane. The channel at the outer mitochondrial membrane allows diffusion of small hydrophilic molecules; in the plasma membrane it is involved in cell volume regulation and apoptosis. It adopts an open conformation at low or zero membrane potential and a closed conformation at potentials above 30-40 mV. The open state has a weak anion selectivity whereas the closed state is cation-selective. Binds various signaling molecules, including the sphingolipid ceramide, the phospholipid phosphatidylcholine, and the sterols cholesterol and oxysterol. In depolarized mitochondria, acts downstream of PRKN and PINK1 to promote mitophagy or prevent apoptosis; polyubiquitination by PRKN promotes mitophagy, while monoubiquitination by PRKN decreases mitochondrial calcium influx which ultimately inhibits apoptosis. May participate in the formation of the permeability transition pore complex (PTPC) responsible for the release of mitochondrial products that triggers apoptosis. May mediate ATP export from cells. Part of a complex composed of HSPA9, ITPR1 and VDAC1 that regulates mitochondrial calcium-dependent apoptosis by facilitating calcium transport from the ER lumen to the mitochondria intermembrane space thus providing calcium for the downstream calcium channel MCU that directly releases it into mitochondria matrix. Mediates cytochrome c efflux. Functionally, catalyzes the scrambling of phospholipids across the outer mitochondrial membrane; the mechanism is unrelated to channel activity and is capable of translocating both anionic and zwitterionic phospholipids. The protein is Non-selective voltage-gated ion channel VDAC1 of Bos taurus (Bovine).